The chain runs to 319 residues: Acetyl-coenzyme A carboxylase carboxyl transferase subunit alpha (319 aa).

The CoA carboxyltransferase C-terminal domain maps to 39-293; that stretch reads KLEKKVDRMR…HEAIARQLKE (255 aa).

The protein belongs to the AccA family. As to quaternary structure, acetyl-CoA carboxylase is a heterohexamer composed of biotin carboxyl carrier protein (AccB), biotin carboxylase (AccC) and two subunits each of ACCase subunit alpha (AccA) and ACCase subunit beta (AccD).

It is found in the cytoplasm. The enzyme catalyses N(6)-carboxybiotinyl-L-lysyl-[protein] + acetyl-CoA = N(6)-biotinyl-L-lysyl-[protein] + malonyl-CoA. The protein operates within lipid metabolism; malonyl-CoA biosynthesis; malonyl-CoA from acetyl-CoA: step 1/1. In terms of biological role, component of the acetyl coenzyme A carboxylase (ACC) complex. First, biotin carboxylase catalyzes the carboxylation of biotin on its carrier protein (BCCP) and then the CO(2) group is transferred by the carboxyltransferase to acetyl-CoA to form malonyl-CoA. In Geobacter sulfurreducens (strain ATCC 51573 / DSM 12127 / PCA), this protein is Acetyl-coenzyme A carboxylase carboxyl transferase subunit alpha.